The primary structure comprises 104 residues: UPF0145 protein DET1617 (104 aa).

This sequence belongs to the UPF0145 family.

The protein is UPF0145 protein DET1617 of Dehalococcoides mccartyi (strain ATCC BAA-2266 / KCTC 15142 / 195) (Dehalococcoides ethenogenes (strain 195)).